A 510-amino-acid chain; its full sequence is D-alanine--D-alanyl carrier protein ligase (510 aa).

157–158 is an ATP binding site; it reads TS. Aspartate 202 is a D-alanine binding site. ATP is bound at residue 297-302; it reads NTYGPT. Valine 306 is a D-alanine binding site. ATP is bound by residues aspartate 389 and lysine 498. Lysine 498 provides a ligand contact to D-alanine.

It belongs to the ATP-dependent AMP-binding enzyme family. DltA subfamily.

Its subcellular location is the cytoplasm. It catalyses the reaction holo-[D-alanyl-carrier protein] + D-alanine + ATP = D-alanyl-[D-alanyl-carrier protein] + AMP + diphosphate. It functions in the pathway cell wall biogenesis; lipoteichoic acid biosynthesis. Catalyzes the first step in the D-alanylation of lipoteichoic acid (LTA), the activation of D-alanine and its transfer onto the D-alanyl carrier protein (Dcp) DltC. In an ATP-dependent two-step reaction, forms a high energy D-alanyl-AMP intermediate, followed by transfer of the D-alanyl residue as a thiol ester to the phosphopantheinyl prosthetic group of the Dcp. D-alanylation of LTA plays an important role in modulating the properties of the cell wall in Gram-positive bacteria, influencing the net charge of the cell wall. This chain is D-alanine--D-alanyl carrier protein ligase, found in Listeria welshimeri serovar 6b (strain ATCC 35897 / DSM 20650 / CCUG 15529 / CIP 8149 / NCTC 11857 / SLCC 5334 / V8).